Consider the following 318-residue polypeptide: NADH-ubiquinone oxidoreductase chain 1 (318 aa).

Helical transmembrane passes span 3 to 23 (MVNL…LTLI), 70 to 90 (MFII…IPLP), 100 to 120 (LAVL…LWSG), 146 to 166 (LAII…STLI), 171 to 191 (HTWL…STLA), 222 to 242 (LFFM…AILF), 253 to 273 (ELYT…FLWI), and 294 to 314 (LPLT…MAGI).

Belongs to the complex I subunit 1 family.

It is found in the mitochondrion inner membrane. It carries out the reaction a ubiquinone + NADH + 5 H(+)(in) = a ubiquinol + NAD(+) + 4 H(+)(out). Core subunit of the mitochondrial membrane respiratory chain NADH dehydrogenase (Complex I) that is believed to belong to the minimal assembly required for catalysis. Complex I functions in the transfer of electrons from NADH to the respiratory chain. The immediate electron acceptor for the enzyme is believed to be ubiquinone. The polypeptide is NADH-ubiquinone oxidoreductase chain 1 (MT-ND1) (Pteropus vampyrus (Large flying fox)).